Here is a 1064-residue protein sequence, read N- to C-terminus: DNA-directed RNA polymerase subunit beta (1064 aa).

This sequence belongs to the RNA polymerase beta chain family. As to quaternary structure, in plastids the minimal PEP RNA polymerase catalytic core is composed of four subunits: alpha, beta, beta', and beta''. When a (nuclear-encoded) sigma factor is associated with the core the holoenzyme is formed, which can initiate transcription.

Its subcellular location is the plastid. The protein localises to the chloroplast. It catalyses the reaction RNA(n) + a ribonucleoside 5'-triphosphate = RNA(n+1) + diphosphate. In terms of biological role, DNA-dependent RNA polymerase catalyzes the transcription of DNA into RNA using the four ribonucleoside triphosphates as substrates. The protein is DNA-directed RNA polymerase subunit beta of Jasminum nudiflorum (Winter jasmine).